The following is a 490-amino-acid chain: DNA-binding protein D-ETS-3 (490 aa).

2 disordered regions span residues 190–255 (TASS…SGGG) and 271–294 (SSTQ…SQLR). Residues 196–207 (HVEHKVRADKST) are compositionally biased toward basic and acidic residues. Residues 211-227 (ATTSSHAAAPSSSSSAS) show a composition bias toward low complexity. The segment covering 244-255 (GTGGGASASGGG) has biased composition (gly residues). Low complexity predominate over residues 271 to 280 (SSTQSQGYSS). The segment at residues 317–397 (IQLWQFLLEL…HGKRYAYKFD (81 aa)) is a DNA-binding region (ETS).

The protein belongs to the ETS family. In terms of tissue distribution, embryonic ventral nervous system, higher in the thoracic than abdominal segments.

It localises to the nucleus. In Drosophila melanogaster (Fruit fly), this protein is DNA-binding protein D-ETS-3 (Ets65A).